The sequence spans 196 residues: dTTP/UTP pyrophosphatase (196 aa).

Asp-76 acts as the Proton acceptor in catalysis.

This sequence belongs to the Maf family. YhdE subfamily. A divalent metal cation serves as cofactor.

Its subcellular location is the cytoplasm. The enzyme catalyses dTTP + H2O = dTMP + diphosphate + H(+). It carries out the reaction UTP + H2O = UMP + diphosphate + H(+). Functionally, nucleoside triphosphate pyrophosphatase that hydrolyzes dTTP and UTP. May have a dual role in cell division arrest and in preventing the incorporation of modified nucleotides into cellular nucleic acids. This is dTTP/UTP pyrophosphatase from Chlorobium chlorochromatii (strain CaD3).